Reading from the N-terminus, the 623-residue chain is Laccase-1 (623 aa).

Positions 1–22 (MKTFTSALALVVGMLAPGAVVA) are cleaved as a signal peptide. Positions 23–50 (APPSTPAQRDLVELREARQEGGKDLRPR) are excised as a propeptide. A disulfide bridge connects residues Cys54 and Cys62. 2 N-linked (GlcNAc...) asparagine glycosylation sites follow: Asn89 and Asn138. Cu cation contacts are provided by His143, His145, His188, and His190. Intrachain disulfides connect Cys164-Cys590 and Cys348-Cys382. N-linked (GlcNAc...) asparagine glycans are attached at residues Asn251, Asn266, Asn294, and Asn339. 2 N-linked (GlcNAc...) asparagine glycosylation sites follow: Asn426 and Asn446. The Cu cation site is built by His481, His484, His486, His552, Cys553, His554, and His558. A propeptide spanning residues 610-623 (KRRRWVEESEWLVR) is cleaved from the precursor.

The protein belongs to the multicopper oxidase family. In terms of assembly, monomer. The cofactor is Cu cation. In terms of tissue distribution, secreted protein; extracellular space.

It carries out the reaction 4 hydroquinone + O2 = 4 benzosemiquinone + 2 H2O. Its function is as follows. Lignin degradation and detoxification of lignin-derived products. The protein is Laccase-1 (LAC1) of Melanocarpus albomyces.